Here is a 330-residue protein sequence, read N- to C-terminus: Biotin synthase (330 aa).

The Radical SAM core domain occupies 53–276 (NNIRLNVLLS…VFPFKELRLS (224 aa)). Positions 68, 72, and 75 each coordinate [4Fe-4S] cluster. Residues C112, C144, C204, and R274 each contribute to the [2Fe-2S] cluster site.

Belongs to the radical SAM superfamily. Biotin synthase family. Homodimer. It depends on [4Fe-4S] cluster as a cofactor. [2Fe-2S] cluster is required as a cofactor.

It catalyses the reaction (4R,5S)-dethiobiotin + (sulfur carrier)-SH + 2 reduced [2Fe-2S]-[ferredoxin] + 2 S-adenosyl-L-methionine = (sulfur carrier)-H + biotin + 2 5'-deoxyadenosine + 2 L-methionine + 2 oxidized [2Fe-2S]-[ferredoxin]. Its pathway is cofactor biosynthesis; biotin biosynthesis; biotin from 7,8-diaminononanoate: step 2/2. In terms of biological role, catalyzes the conversion of dethiobiotin (DTB) to biotin by the insertion of a sulfur atom into dethiobiotin via a radical-based mechanism. The protein is Biotin synthase of Streptococcus agalactiae serotype V (strain ATCC BAA-611 / 2603 V/R).